Consider the following 178-residue polypeptide: Peptide deformylase (178 aa).

2 residues coordinate Fe cation: cysteine 96 and histidine 138. Residue glutamate 139 is part of the active site. Histidine 142 lines the Fe cation pocket.

The protein belongs to the polypeptide deformylase family. Fe(2+) is required as a cofactor.

It carries out the reaction N-terminal N-formyl-L-methionyl-[peptide] + H2O = N-terminal L-methionyl-[peptide] + formate. Its function is as follows. Removes the formyl group from the N-terminal Met of newly synthesized proteins. Requires at least a dipeptide for an efficient rate of reaction. N-terminal L-methionine is a prerequisite for activity but the enzyme has broad specificity at other positions. The sequence is that of Peptide deformylase from Bartonella tribocorum (strain CIP 105476 / IBS 506).